A 615-amino-acid chain; its full sequence is MAVYVGMLRLGRLCAGSSGVLGARVALSRSWQEARLQGVRFLSSREVDRMVSLPIGGLSYVQGCTKKHLNSKTVGQCLDTTAQRVPEREALVVLHEDVRLTFGQLKEEVDKAASGLLSIGLCKGDRLGMWGPNSYAWVLMQLATAQAGIILVSVNPAYQAMELEYVLKKVGCKALVFPKQFKTQQYYNILKQICPEVDNAQPGGLKSQRLPDLTTVISVDAPLPGTLLLDEVVAAGSTRQHLDQLQYNQQFLSCHDPINIQFTSGTTGSPKGATLSHYNIVNNSNMLGERLKLHEKTPEQLRMILPSPLYHCLGSVGGTMMCLMYGATLILASPVFNGKKALEAISRERGSFLYGTPTMFVDILNQPDFSSYDISTMCGGVIAGSPAPPELIRAIINKINMKDLVVAYGTPENSPVTFAHFPEDTVEQKAESVGRIMPHTEARIMNMEAGTLAELNTPGELCIRGYCVMLGYWGEPQKTEEAVDQDKWYRTGDVATMNEQGFCKIVGRSKDMIIRGGENIYPAELEDFFHTHPKVQEVQVVGVKDDRMGEEICACIRLKDGEETTVEEIKAFCKGKISHFKIPRYIVFVTNYPLTISGKIQKFKLREQMERHLNL.

Residues 1–41 (MAVYVGMLRLGRLCAGSSGVLGARVALSRSWQEARLQGVRF) constitute a mitochondrion transit peptide. Lys179 is subject to N6-acetyllysine. The residue at position 182 (Lys182) is an N6-acetyllysine; alternate. Residue Lys182 is modified to N6-succinyllysine; alternate. Residue 263 to 271 (TSGTTGSPK) coordinates ATP. N6-acetyllysine occurs at positions 340 and 398. At Lys478 the chain carries N6-succinyllysine. ATP-binding residues include Asp493 and Arg508. N6-acetyllysine is present on Lys510. 2 positions are modified to N6-acetyllysine; alternate: Lys544 and Lys570. An N6-succinyllysine; alternate mark is found at Lys544 and Lys570. Lys599 contributes to the ATP binding site. The residue at position 599 (Lys599) is an N6-succinyllysine.

Belongs to the ATP-dependent AMP-binding enzyme family.

It is found in the mitochondrion. It carries out the reaction a medium-chain fatty acid + ATP + CoA = a medium-chain fatty acyl-CoA + AMP + diphosphate. The catalysed reaction is octanoate + ATP + CoA = octanoyl-CoA + AMP + diphosphate. Functionally, acyl-CoA synthases catalyze the initial reaction in fatty acid metabolism, by forming a thioester with CoA. Has some preference toward medium-chain substrates. Plays a role in adipocyte differentiation. This Pongo abelii (Sumatran orangutan) protein is Medium-chain acyl-CoA ligase ACSF2, mitochondrial.